Here is a 398-residue protein sequence, read N- to C-terminus: Bifunctional enzyme IspD/IspF (398 aa).

Positions 1-237 are 2-C-methyl-D-erythritol 4-phosphate cytidylyltransferase; the sequence is MSISIAAIIL…QKKMQMFPDI (237 aa). Residues 238-398 are 2-C-methyl-D-erythritol 2,4-cyclodiphosphate synthase; that stretch reads RVGNGYDVHS…SVLYPGEIPQ (161 aa). A divalent metal cation-binding residues include D244 and H246. Residues 244–246 and 270–271 each bind 4-CDP-2-C-methyl-D-erythritol 2-phosphate; these read DVH and HS. H278 is a binding site for a divalent metal cation. 4-CDP-2-C-methyl-D-erythritol 2-phosphate contacts are provided by residues 292 to 294, 368 to 371, F375, and R378; these read DIG and TTNE.

The protein in the N-terminal section; belongs to the IspD/TarI cytidylyltransferase family. IspD subfamily. This sequence in the C-terminal section; belongs to the IspF family. The cofactor is a divalent metal cation.

It catalyses the reaction 2-C-methyl-D-erythritol 4-phosphate + CTP + H(+) = 4-CDP-2-C-methyl-D-erythritol + diphosphate. The catalysed reaction is 4-CDP-2-C-methyl-D-erythritol 2-phosphate = 2-C-methyl-D-erythritol 2,4-cyclic diphosphate + CMP. Its pathway is isoprenoid biosynthesis; isopentenyl diphosphate biosynthesis via DXP pathway; isopentenyl diphosphate from 1-deoxy-D-xylulose 5-phosphate: step 2/6. It functions in the pathway isoprenoid biosynthesis; isopentenyl diphosphate biosynthesis via DXP pathway; isopentenyl diphosphate from 1-deoxy-D-xylulose 5-phosphate: step 4/6. In terms of biological role, bifunctional enzyme that catalyzes the formation of 4-diphosphocytidyl-2-C-methyl-D-erythritol from CTP and 2-C-methyl-D-erythritol 4-phosphate (MEP) (IspD), and catalyzes the conversion of 4-diphosphocytidyl-2-C-methyl-D-erythritol 2-phosphate (CDP-ME2P) to 2-C-methyl-D-erythritol 2,4-cyclodiphosphate (ME-CPP) with a corresponding release of cytidine 5-monophosphate (CMP) (IspF). The sequence is that of Bifunctional enzyme IspD/IspF from Bartonella tribocorum (strain CIP 105476 / IBS 506).